Consider the following 466-residue polypeptide: Asparagine--tRNA ligase (466 aa).

It belongs to the class-II aminoacyl-tRNA synthetase family. Homodimer.

The protein localises to the cytoplasm. The enzyme catalyses tRNA(Asn) + L-asparagine + ATP = L-asparaginyl-tRNA(Asn) + AMP + diphosphate + H(+). The protein is Asparagine--tRNA ligase of Shewanella amazonensis (strain ATCC BAA-1098 / SB2B).